Consider the following 180-residue polypeptide: Trichosurin (180 aa).

Residues 1–15 (MKLLLLSMGLALVCG) form the signal peptide. Residues Asn67 and Asn148 are each glycosylated (N-linked (GlcNAc...) asparagine). Cysteines 87 and 180 form a disulfide.

It belongs to the calycin superfamily. Lipocalin family. As to quaternary structure, homodimer. As to expression, milk.

Its subcellular location is the secreted. The sequence is that of Trichosurin from Trichosurus vulpecula (Brush-tailed possum).